A 527-amino-acid chain; its full sequence is 4-alpha-glucanotransferase (527 aa).

It belongs to the disproportionating enzyme family.

The protein resides in the cytoplasm. The enzyme catalyses Transfers a segment of a (1-&gt;4)-alpha-D-glucan to a new position in an acceptor, which may be glucose or a (1-&gt;4)-alpha-D-glucan.. The chain is 4-alpha-glucanotransferase (malQ) from Chlamydia trachomatis serovar D (strain ATCC VR-885 / DSM 19411 / UW-3/Cx).